A 488-amino-acid polypeptide reads, in one-letter code: Glutamyl-tRNA(Gln) amidotransferase subunit A (488 aa).

Active-site charge relay system residues include Lys77 and Ser152. Catalysis depends on Ser176, which acts as the Acyl-ester intermediate.

It belongs to the amidase family. GatA subfamily. Heterotrimer of A, B and C subunits.

It carries out the reaction L-glutamyl-tRNA(Gln) + L-glutamine + ATP + H2O = L-glutaminyl-tRNA(Gln) + L-glutamate + ADP + phosphate + H(+). In terms of biological role, allows the formation of correctly charged Gln-tRNA(Gln) through the transamidation of misacylated Glu-tRNA(Gln) in organisms which lack glutaminyl-tRNA synthetase. The reaction takes place in the presence of glutamine and ATP through an activated gamma-phospho-Glu-tRNA(Gln). The sequence is that of Glutamyl-tRNA(Gln) amidotransferase subunit A from Streptococcus pyogenes serotype M12 (strain MGAS2096).